A 265-amino-acid chain; its full sequence is Indole-3-glycerol phosphate synthase (265 aa).

Belongs to the TrpC family.

It carries out the reaction 1-(2-carboxyphenylamino)-1-deoxy-D-ribulose 5-phosphate + H(+) = (1S,2R)-1-C-(indol-3-yl)glycerol 3-phosphate + CO2 + H2O. It functions in the pathway amino-acid biosynthesis; L-tryptophan biosynthesis; L-tryptophan from chorismate: step 4/5. The sequence is that of Indole-3-glycerol phosphate synthase from Xanthomonas euvesicatoria pv. vesicatoria (strain 85-10) (Xanthomonas campestris pv. vesicatoria).